We begin with the raw amino-acid sequence, 256 residues long: NAD-dependent protein deacetylase (256 aa).

Positions 1–254 (MDISYHEKIS…KDILDVIKSE (254 aa)) constitute a Deacetylase sirtuin-type domain. NAD(+)-binding residues include alanine 28, threonine 32, phenylalanine 39, arginine 40, glutamine 105, isoleucine 107, aspartate 108, and histidine 123. Residue phenylalanine 39 participates in nicotinamide binding. The nicotinamide site is built by isoleucine 107 and aspartate 108. Histidine 123 (proton acceptor) is an active-site residue. Residues cysteine 131, cysteine 134, cysteine 156, and cysteine 159 each contribute to the Zn(2+) site. Positions 197, 198, and 222 each coordinate NAD(+).

This sequence belongs to the sirtuin family. Class U subfamily. Zn(2+) is required as a cofactor.

Its subcellular location is the cytoplasm. It carries out the reaction N(6)-acetyl-L-lysyl-[protein] + NAD(+) + H2O = 2''-O-acetyl-ADP-D-ribose + nicotinamide + L-lysyl-[protein]. In terms of biological role, NAD-dependent protein deacetylase which modulates the activities of several enzymes which are inactive in their acetylated form. This is NAD-dependent protein deacetylase from Thermodesulfovibrio yellowstonii (strain ATCC 51303 / DSM 11347 / YP87).